The sequence spans 350 residues: Small ribosomal subunit biogenesis GTPase RsgA (350 aa).

A compositionally biased stretch (polar residues) spans 1 to 17; it reads MSKNKLSKGQQRRVNAN. Positions 1–27 are disordered; the sequence is MSKNKLSKGQQRRVNANHQRRLKTSAE. The 170-residue stretch at 104 to 273 folds into the CP-type G domain; the sequence is TSVLTRPDFY…VIDSPGVREF (170 aa). GTP-binding positions include 160–163 and 214–222; these read NKID and GQSGVGKSS. Cys-297, Cys-302, His-304, and Cys-310 together coordinate Zn(2+).

The protein belongs to the TRAFAC class YlqF/YawG GTPase family. RsgA subfamily. As to quaternary structure, monomer. Associates with 30S ribosomal subunit, binds 16S rRNA. The cofactor is Zn(2+).

It localises to the cytoplasm. Its function is as follows. One of several proteins that assist in the late maturation steps of the functional core of the 30S ribosomal subunit. Helps release RbfA from mature subunits. May play a role in the assembly of ribosomal proteins into the subunit. Circularly permuted GTPase that catalyzes slow GTP hydrolysis, GTPase activity is stimulated by the 30S ribosomal subunit. In Salmonella typhi, this protein is Small ribosomal subunit biogenesis GTPase RsgA.